The chain runs to 161 residues: Large ribosomal subunit protein uL15 (161 aa).

Residues 1 to 57 (MRLKDAIPKKGSQQRGRRVGRGISAGQGASCGKGMRGQKSRSGGSTRPGFEGGQNPL) form a disordered region. The segment covering 23–35 (ISAGQGASCGKGM) has biased composition (gly residues).

The protein belongs to the universal ribosomal protein uL15 family. Part of the 50S ribosomal subunit.

Its function is as follows. Binds to the 23S rRNA. This chain is Large ribosomal subunit protein uL15, found in Trichodesmium erythraeum (strain IMS101).